Here is a 526-residue protein sequence, read N- to C-terminus: Non-reducing end alpha-L-arabinofuranosidase BoGH43A (526 aa).

Residues M1 to A20 form the signal peptide. The active-site Proton acceptor is D34. Residue E189 is the Proton donor of the active site.

It belongs to the glycosyl hydrolase 43 family.

The protein resides in the periplasm. The enzyme catalyses Hydrolysis of terminal non-reducing alpha-L-arabinofuranoside residues in alpha-L-arabinosides.. Its pathway is glucan metabolism; xyloglucan degradation. In terms of biological role, alpha-L-arabinofuranosidase involved in xyloglucan degradation by mediating the cleavage of terminal non-reducing alpha-L-arabinofuranoside residues in xyloglucan branches, converting the 'S' units to 'X' units. The protein is Non-reducing end alpha-L-arabinofuranosidase BoGH43A of Bacteroides ovatus (strain ATCC 8483 / DSM 1896 / JCM 5824 / BCRC 10623 / CCUG 4943 / NCTC 11153).